The primary structure comprises 422 residues: Histidine--tRNA ligase (422 aa).

Belongs to the class-II aminoacyl-tRNA synthetase family. As to quaternary structure, homodimer.

Its subcellular location is the cytoplasm. It carries out the reaction tRNA(His) + L-histidine + ATP = L-histidyl-tRNA(His) + AMP + diphosphate + H(+). The polypeptide is Histidine--tRNA ligase (Vibrio atlanticus (strain LGP32) (Vibrio splendidus (strain Mel32))).